Consider the following 174-residue polypeptide: Methylated-DNA--protein-cysteine methyltransferase (174 aa).

Cys-144 acts as the Nucleophile; methyl group acceptor in catalysis.

Belongs to the MGMT family.

Its subcellular location is the cytoplasm. It catalyses the reaction a 6-O-methyl-2'-deoxyguanosine in DNA + L-cysteinyl-[protein] = S-methyl-L-cysteinyl-[protein] + a 2'-deoxyguanosine in DNA. The enzyme catalyses a 4-O-methyl-thymidine in DNA + L-cysteinyl-[protein] = a thymidine in DNA + S-methyl-L-cysteinyl-[protein]. Involved in the cellular defense against the biological effects of O6-methylguanine (O6-MeG) and O4-methylthymine (O4-MeT) in DNA. Repairs the methylated nucleobase in DNA by stoichiometrically transferring the methyl group to a cysteine residue in the enzyme. This is a suicide reaction: the enzyme is irreversibly inactivated. This Pyrococcus furiosus (strain ATCC 43587 / DSM 3638 / JCM 8422 / Vc1) protein is Methylated-DNA--protein-cysteine methyltransferase.